Reading from the N-terminus, the 185-residue chain is uncharacterized protein (185 aa).

The Cytoplasmic segment spans residues 1-69 (MSSFIDSIKS…SSDCSRAERT (69 aa)). A helical transmembrane segment spans residues 70 to 90 (FNLILFAIVDLVICCESMAFF). A topological domain (extracellular) is located at residue N91. A helical membrane pass occupies residues 92–112 (LLLKLPSMLLVSFLTMLVFSI). Topologically, residues 113-118 (SYSWSA) are cytoplasmic. A helical membrane pass occupies residues 119–139 (FNWISFAFSSASFLMKACILF). Topologically, residues 140-185 (NSSFTWFGVKAVIAEDMLYRMVRGLFCASFVKQLQTTFLATAIVLC) are extracellular.

The protein resides in the membrane. This is an uncharacterized protein from Saccharomyces cerevisiae (strain ATCC 204508 / S288c) (Baker's yeast).